We begin with the raw amino-acid sequence, 254 residues long: DNA-3-methyladenine glycosylase (254 aa).

The segment covering 1–10 (MKTPARRSKR) has biased composition (basic residues). A disordered region spans residues 1-20 (MKTPARRSKRVNQEESETNV).

The protein belongs to the DNA glycosylase MPG family.

The protein localises to the nucleus. The catalysed reaction is Hydrolysis of alkylated DNA, releasing 3-methyladenine, 3-methylguanine, 7-methylguanine and 7-methyladenine.. Hydrolysis of the deoxyribose N-glycosidic bond to excise 3-methyladenine, and 7-methylguanine from the damaged DNA polymer formed by alkylation lesions. This chain is DNA-3-methyladenine glycosylase (MAG), found in Arabidopsis thaliana (Mouse-ear cress).